The chain runs to 361 residues: Zinc transporter ZIP13 (361 aa).

The Lumenal portion of the chain corresponds to 1–6 (MPGCPC). The helical transmembrane segment at 7–27 (PGCGMAGQRLLFLTVLALELL) threads the bilayer. Over 28 to 68 (ERAGGSQPALRSLGAAAACRLDSKESESWGALLSGERLDTW) the chain is Cytoplasmic. The helical transmembrane segment at 69–89 (ICSLLGSLMVGLSGVFPLLVI) threads the bilayer. Topologically, residues 90-108 (PLEMGTMLQSEAGAWRLKQ) are lumenal. The chain crosses the membrane as a helical span at residues 109 to 129 (LLSFALGGLLGNVFLHLLPEA). Over 130-150 (WAYTCNISPGVEGQSLQRQQQ) the chain is Cytoplasmic. Residues 151 to 171 (LGLWVIAGFLTFLALEKMFLN) form a helical membrane-spanning segment. The Lumenal segment spans residues 172–233 (CKEEDPSQAP…TIDNFTHGLA (62 aa)). The helical transmembrane segment at 234 to 254 (VAASFLVSKKIGLLTTMAILL) threads the bilayer. The short motif at 255–260 (HEIPHE) is the XEXPHE-motif element. The Cytoplasmic segment spans residues 255–276 (HEIPHEVGDFAILLRAGFDRWT). A helical membrane pass occupies residues 277–297 (AAKLQFSTALGGLLGACFAIC). At 298–307 (TQSPKGVEET) the chain is on the lumenal side. Residues 308 to 328 (VVWTLPFTSGGFLYVALVNVL) form a helical membrane-spanning segment. Topologically, residues 329–340 (PDLLEEDDPWHL) are cytoplasmic. The chain crosses the membrane as a helical span at residues 341-361 (NPPLPTGTPCSRCCCSAPVSW).

This sequence belongs to the ZIP transporter (TC 2.A.5) family. As to quaternary structure, homodimer.

It is found in the golgi apparatus membrane. It localises to the cytoplasmic vesicle membrane. The protein localises to the endoplasmic reticulum membrane. It catalyses the reaction Zn(2+)(in) = Zn(2+)(out). Functionally, functions as a zinc transporter transporting Zn(2+) from the Golgi apparatus to the cytosol and thus influences the zinc level at least in areas of the cytosol. May regulate beige adipocyte differentiation. In Rattus norvegicus (Rat), this protein is Zinc transporter ZIP13.